Here is a 100-residue protein sequence, read N- to C-terminus: Urease subunit gamma (100 aa).

The protein belongs to the urease gamma subunit family. In terms of assembly, heterotrimer of UreA (gamma), UreB (beta) and UreC (alpha) subunits. Three heterotrimers associate to form the active enzyme.

The protein resides in the cytoplasm. It carries out the reaction urea + 2 H2O + H(+) = hydrogencarbonate + 2 NH4(+). It participates in nitrogen metabolism; urea degradation; CO(2) and NH(3) from urea (urease route): step 1/1. The sequence is that of Urease subunit gamma from Staphylococcus aureus (strain N315).